We begin with the raw amino-acid sequence, 230 residues long: Ribose-5-phosphate isomerase A (230 aa).

Residues Thr29 to Thr32, Asp85 to Asp88, and Lys98 to Gly101 contribute to the substrate site. Residue Glu107 is the Proton acceptor of the active site. Lys125 contacts substrate.

Belongs to the ribose 5-phosphate isomerase family. As to quaternary structure, homodimer.

The catalysed reaction is aldehydo-D-ribose 5-phosphate = D-ribulose 5-phosphate. The protein operates within carbohydrate degradation; pentose phosphate pathway; D-ribose 5-phosphate from D-ribulose 5-phosphate (non-oxidative stage): step 1/1. Catalyzes the reversible conversion of ribose-5-phosphate to ribulose 5-phosphate. This chain is Ribose-5-phosphate isomerase A, found in Staphylococcus haemolyticus (strain JCSC1435).